Here is a 464-residue protein sequence, read N- to C-terminus: Dihydrolipoyl dehydrogenase (464 aa).

FAD contacts are provided by residues 36 to 44, Lys-53, and Ala-119; that span reads EGAALGGTC. A disulfide bridge connects residues Cys-44 and Cys-49. Residues 184-188, Glu-207, and 269-272 each bind NAD(+); these read GGGYI and AVGR. FAD-binding residues include Asp-311 and Ala-319. His-443 serves as the catalytic Proton acceptor.

This sequence belongs to the class-I pyridine nucleotide-disulfide oxidoreductase family. Homodimer. It depends on FAD as a cofactor.

The protein localises to the cytoplasm. The catalysed reaction is N(6)-[(R)-dihydrolipoyl]-L-lysyl-[protein] + NAD(+) = N(6)-[(R)-lipoyl]-L-lysyl-[protein] + NADH + H(+). In terms of biological role, the branched-chain alpha-keto dehydrogenase complex catalyzes the overall conversion of alpha-keto acids to acyl-CoA and CO(2). It contains multiple copies of 3 enzymatic components: branched-chain alpha-keto acid decarboxylase (E1), lipoamide acyltransferase (E2) and lipoamide dehydrogenase (E3). The polypeptide is Dihydrolipoyl dehydrogenase (Pseudomonas aeruginosa (strain ATCC 15692 / DSM 22644 / CIP 104116 / JCM 14847 / LMG 12228 / 1C / PRS 101 / PAO1)).